The primary structure comprises 519 residues: GTPase Der (519 aa).

Composition is skewed to acidic residues over residues 1–12 (MDVEGAFADEEE) and 30–54 (GYED…PDFG). A disordered region spans residues 1-54 (MDVEGAFADEEELAPHGGWASADFDPAEFGYEDSDDDFDAEDFDETEFSNPDFG). 2 consecutive EngA-type G domains span residues 81–244 (CTVA…PEEP) and 254–427 (RRVA…DNWD). GTP is bound by residues 87 to 94 (GRPNVGKS), 134 to 138 (DTGGW), 196 to 199 (NKFD), 260 to 267 (GKPNVGKS), 307 to 311 (DTAGL), and 372 to 375 (NKWD). The KH-like domain occupies 428 to 510 (RRISTGQLNT…PVRIAVRVRE (83 aa)).

This sequence belongs to the TRAFAC class TrmE-Era-EngA-EngB-Septin-like GTPase superfamily. EngA (Der) GTPase family. In terms of assembly, associates with the 50S ribosomal subunit.

GTPase that plays an essential role in the late steps of ribosome biogenesis. The sequence is that of GTPase Der from Corynebacterium glutamicum (strain ATCC 13032 / DSM 20300 / JCM 1318 / BCRC 11384 / CCUG 27702 / LMG 3730 / NBRC 12168 / NCIMB 10025 / NRRL B-2784 / 534).